A 279-amino-acid chain; its full sequence is Shikimate dehydrogenase (NADP(+)) (279 aa).

Shikimate-binding positions include 17–19 (SLS) and Thr64. Lys68 acts as the Proton acceptor in catalysis. An NADP(+)-binding site is contributed by Asp80. Shikimate contacts are provided by Asn89 and Asp105. NADP(+)-binding positions include 129-133 (GAGGS), 153-158 (NRTAKK), and Leu221. Tyr223 is a binding site for shikimate. Residue Gly245 coordinates NADP(+).

This sequence belongs to the shikimate dehydrogenase family. In terms of assembly, homodimer.

It carries out the reaction shikimate + NADP(+) = 3-dehydroshikimate + NADPH + H(+). Its pathway is metabolic intermediate biosynthesis; chorismate biosynthesis; chorismate from D-erythrose 4-phosphate and phosphoenolpyruvate: step 4/7. In terms of biological role, involved in the biosynthesis of the chorismate, which leads to the biosynthesis of aromatic amino acids. Catalyzes the reversible NADPH linked reduction of 3-dehydroshikimate (DHSA) to yield shikimate (SA). The sequence is that of Shikimate dehydrogenase (NADP(+)) from Idiomarina loihiensis (strain ATCC BAA-735 / DSM 15497 / L2-TR).